A 771-amino-acid polypeptide reads, in one-letter code: Protein translocase subunit SecA 2 (771 aa).

Residues Gln91, 109–113, and Asp496 each bind ATP; that span reads GEGKT.

It belongs to the SecA family. In terms of assembly, monomer and homodimer. Part of the essential Sec protein translocation apparatus which comprises SecA, SecYEG and auxiliary proteins SecDF. Other proteins may also be involved.

It localises to the cell membrane. The protein resides in the cytoplasm. It carries out the reaction ATP + H2O + cellular proteinSide 1 = ADP + phosphate + cellular proteinSide 2.. In terms of biological role, part of the Sec protein translocase complex. Interacts with the SecYEG preprotein conducting channel. Has a central role in coupling the hydrolysis of ATP to the transfer of proteins into and across the cell membrane, serving as an ATP-driven molecular motor driving the stepwise translocation of polypeptide chains across the membrane. This chain is Protein translocase subunit SecA 2, found in Corynebacterium jeikeium (strain K411).